The chain runs to 613 residues: Chaperone protein DnaK (613 aa).

The segment at 579 to 613 (MYQSASSTTQTGSGNQNSSKQENDKTVDAEYKEKS) is disordered. The segment covering 581-597 (QSASSTTQTGSGNQNSS) has biased composition (low complexity). Over residues 599–613 (QENDKTVDAEYKEKS) the composition is skewed to basic and acidic residues.

Belongs to the heat shock protein 70 family.

Functionally, acts as a chaperone. The sequence is that of Chaperone protein DnaK from Thermoplasma volcanium (strain ATCC 51530 / DSM 4299 / JCM 9571 / NBRC 15438 / GSS1).